Here is a 2060-residue protein sequence, read N- to C-terminus: Fatty acid synthase subunit beta (2060 aa).

Positions 1–32 (MFPGDMESKASSMNGDQPSSPTPSSSTSVTIP) are disordered. Over residues 18 to 32 (PSSPTPSSSTSVTIP) the composition is skewed to low complexity. An acetyltransferase (AT) domain region spans residues 182-543 (VYVIFGGQGN…KAGQGVRVIH (362 aa)). S301 serves as the catalytic For acetyltransferase activity. Residues 600-845 (TRLFLQPPIM…LIVATEGAPD (246 aa)) form an enoyl reductase (ER) domain region. The tract at residues 1157–1640 (DKNLNWAKAL…CTGDRLAVSM (484 aa)) is dehydratase (DH) domain. The MaoC-like domain maps to 1549–1661 (FEEQEISFTA…VEVQIHKNMA (113 aa)). Positions 1679-2043 (LVFTGQGSQK…FNEVLRLTGS (365 aa)) are malonyl/palmitoyl transferase (MT/PT) domain. Catalysis depends on S1824, which acts as the For malonyltransferase activity.

This sequence belongs to the fungal fatty acid synthetase subunit beta family. In terms of assembly, [Alpha(6)beta(6)] hexamers of two multifunctional subunits (alpha and beta).

The catalysed reaction is acetyl-CoA + n malonyl-CoA + 2n NADPH + 4n H(+) = a long-chain-acyl-CoA + n CoA + n CO2 + 2n NADP(+).. It carries out the reaction holo-[ACP] + acetyl-CoA = acetyl-[ACP] + CoA. It catalyses the reaction holo-[ACP] + malonyl-CoA = malonyl-[ACP] + CoA. The enzyme catalyses a (3R)-hydroxyacyl-[ACP] = a (2E)-enoyl-[ACP] + H2O. The catalysed reaction is a 2,3-saturated acyl-[ACP] + NAD(+) = a (2E)-enoyl-[ACP] + NADH + H(+). It carries out the reaction (9Z)-octadecenoyl-[ACP] + H2O = (9Z)-octadecenoate + holo-[ACP] + H(+). It participates in mycotoxin biosynthesis. Functionally, fatty acid synthase subunit beta; part of the gene cluster that mediates the biosynthesis of gramillins A and B, bicyclic lipopeptides that induce cell death in maize leaves but not in wheat leaves. The nonribosomal peptide synthetase GRA1 incorporates respectively a glutamic adic (Glu), a leucine (Leu), a serine (Ser), a hydroxyglutamine (HOGln), a 2-amino decanoic acid, and 2 cysteins (CysB and CysA). The biosynthesis of 2-amino decanoic acid incorporated in gramillins could be initiated by a fatty acid synthase composed of the alpha and beta subunits FGSG_00036 and FGSG_11656. The cytochrome P450 monooxygenase FGSG_15680 could hydroxylate the fatty acid chain. Subsequent oxidation to the ketone by the oxidoreductase FGSG_00048 and transamination by aminotransferase FGSG_00049 could form 2-amino-decanoic acid. On the other hand, FGSG_15680 could also be responsible for the HO-modified glutamine at the gamma-position. Whether hydroxylation occurs on the fully assembled product or on the Gln residue prior to assembly into the gramillins requires further proof. The thioredoxin FGSG_00043 could also be required for the disulfide-bond formation between CysA and CysB. The specific involvement of the remaining proteins from the cluster is more difficult to discern, but could have broader regulatory (FGSG_00040 and FGSG_11657) or enzymatic functions (FGSG_00044 and FGSG_00045). The final C-domain of GRA1 does not possess the expected sequence of a termination CT domain, often implicated in macrocyclization and release of a cyclopeptidein fungal NRPs; and the thioesterase FGSG_00047 may act in concert with the terminal C-domain of GRA1 to catalyze the formation of the macrocyclic anhydride and release of the products. The polypeptide is Fatty acid synthase subunit beta (Gibberella zeae (strain ATCC MYA-4620 / CBS 123657 / FGSC 9075 / NRRL 31084 / PH-1) (Wheat head blight fungus)).